Here is a 76-residue protein sequence, read N- to C-terminus: UPF0346 protein lhv_1069 (76 aa).

The protein belongs to the UPF0346 family.

The chain is UPF0346 protein lhv_1069 from Lactobacillus helveticus (strain DPC 4571).